The primary structure comprises 183 residues: Putative manganese efflux pump MntP (183 aa).

6 consecutive transmembrane segments (helical) span residues 8-28 (MIAL…VALG), 39-59 (IFYI…VGMA), 68-88 (FGSI…GQMI), 108-128 (LFFA…LGIF), 133-153 (MATI…GLLV), and 162-182 (GSYS…KLLF).

The protein belongs to the MntP (TC 9.B.29) family.

Its subcellular location is the cell membrane. Its function is as follows. Probably functions as a manganese efflux pump. This is Putative manganese efflux pump MntP from Geobacillus thermodenitrificans (strain NG80-2).